The following is a 243-amino-acid chain: Biosynthetic peptidoglycan transglycosylase (243 aa).

Residues 21–43 form a helical membrane-spanning segment; the sequence is LLIVSLVSALMSVLQVIVFRFVD.

Belongs to the glycosyltransferase 51 family.

Its subcellular location is the cell inner membrane. It carries out the reaction [GlcNAc-(1-&gt;4)-Mur2Ac(oyl-L-Ala-gamma-D-Glu-L-Lys-D-Ala-D-Ala)](n)-di-trans,octa-cis-undecaprenyl diphosphate + beta-D-GlcNAc-(1-&gt;4)-Mur2Ac(oyl-L-Ala-gamma-D-Glu-L-Lys-D-Ala-D-Ala)-di-trans,octa-cis-undecaprenyl diphosphate = [GlcNAc-(1-&gt;4)-Mur2Ac(oyl-L-Ala-gamma-D-Glu-L-Lys-D-Ala-D-Ala)](n+1)-di-trans,octa-cis-undecaprenyl diphosphate + di-trans,octa-cis-undecaprenyl diphosphate + H(+). The protein operates within cell wall biogenesis; peptidoglycan biosynthesis. Peptidoglycan polymerase that catalyzes glycan chain elongation from lipid-linked precursors. This chain is Biosynthetic peptidoglycan transglycosylase, found in Xylella fastidiosa (strain M12).